Consider the following 275-residue polypeptide: Large ribosomal subunit protein uL2c (275 aa).

The tract at residues 219–267 is disordered; the sequence is TVRGSVMNPCDHPHGGGEGRTPIGRTRPLTPWGKPALGKKTRKTKKLSS. Positions 255 to 264 are enriched in basic residues; that stretch reads LGKKTRKTKK.

It belongs to the universal ribosomal protein uL2 family. Part of the 50S ribosomal subunit.

It is found in the plastid. Its subcellular location is the chloroplast. In Thalassiosira pseudonana (Marine diatom), this protein is Large ribosomal subunit protein uL2c (rpl2).